The chain runs to 100 residues: Aspartyl/glutamyl-tRNA(Asn/Gln) amidotransferase subunit C (100 aa).

This sequence belongs to the GatC family. In terms of assembly, heterotrimer of A, B and C subunits.

It catalyses the reaction L-glutamyl-tRNA(Gln) + L-glutamine + ATP + H2O = L-glutaminyl-tRNA(Gln) + L-glutamate + ADP + phosphate + H(+). It carries out the reaction L-aspartyl-tRNA(Asn) + L-glutamine + ATP + H2O = L-asparaginyl-tRNA(Asn) + L-glutamate + ADP + phosphate + 2 H(+). Its function is as follows. Allows the formation of correctly charged Asn-tRNA(Asn) or Gln-tRNA(Gln) through the transamidation of misacylated Asp-tRNA(Asn) or Glu-tRNA(Gln) in organisms which lack either or both of asparaginyl-tRNA or glutaminyl-tRNA synthetases. The reaction takes place in the presence of glutamine and ATP through an activated phospho-Asp-tRNA(Asn) or phospho-Glu-tRNA(Gln). This chain is Aspartyl/glutamyl-tRNA(Asn/Gln) amidotransferase subunit C, found in Staphylococcus epidermidis (strain ATCC 35984 / DSM 28319 / BCRC 17069 / CCUG 31568 / BM 3577 / RP62A).